The sequence spans 2710 residues: Serine/threonine-protein kinase ATR (2710 aa).

Residues 1647–2257 (TLAKASFRCQ…LWMMAAVSKS (611 aa)) form the FAT domain. One can recognise a PI3K/PI4K catalytic domain in the interval 2368 to 2680 (IADDAEILNS…GVNAAPSLPL (313 aa)). Residues 2374 to 2380 (ILNSLQK) are G-loop. Residues 2545–2553 (GLGDRHGEN) form a catalytic loop region. The activation loop stretch occupies residues 2565–2589 (HVDFSCLFDKGLLLEKPEVVPFRFT). The FATC domain occupies 2678–2710 (LPLSVEGQARRLIAEAVSHSNLGKMYVWWMAWF).

It belongs to the PI3/PI4-kinase family. ATM subfamily.

It is found in the nucleus. The enzyme catalyses L-seryl-[protein] + ATP = O-phospho-L-seryl-[protein] + ADP + H(+). The catalysed reaction is L-threonyl-[protein] + ATP = O-phospho-L-threonyl-[protein] + ADP + H(+). Its function is as follows. Probable serine/threonine kinase. Seems to play a central role in cell-cycle regulation by transmitting DNA damage signals to downstream effectors of cell-cycle progression. May recognize the substrate consensus sequence [ST]-Q and phosphorylate histone variant H2AX to form H2AXS139ph at sites of DNA damage, thereby regulating DNA damage response mechanism. This Oryza sativa subsp. indica (Rice) protein is Serine/threonine-protein kinase ATR.